The primary structure comprises 175 residues: MAPSVMASSATTVAPFQGLKSTAGMPVARRSGNSSFGNVSNGGRIRCMQVWPIEGIKKFETLSYLPPLTVEDLLKQIEYLLRSKWVPCLEFSKVGFVYRENHRSPGYYDGRYWTMWKLPMFGCTDATQVLKELEEAKKAYPDAFVRIIGFDNVRQVQLISFIAYKPPGCEESGGN.

A chloroplast-targeting transit peptide spans 1–46 (MAPSVMASSATTVAPFQGLKSTAGMPVARRSGNSSFGNVSNGGRIR). Residues 60-64 (ETLSY) form an interaction with large subunit region.

It belongs to the RuBisCO small chain family. Heterohexadecamer of 8 large and 8 small subunits.

Its subcellular location is the plastid. The protein resides in the chloroplast. In terms of biological role, ruBisCO catalyzes two reactions: the carboxylation of D-ribulose 1,5-bisphosphate, the primary event in carbon dioxide fixation, as well as the oxidative fragmentation of the pentose substrate. Both reactions occur simultaneously and in competition at the same active site. Although the small subunit is not catalytic it is essential for maximal activity. This chain is Ribulose bisphosphate carboxylase small subunit, chloroplastic, found in Oryza sativa subsp. indica (Rice).